The primary structure comprises 563 residues: Coiled-coil domain-containing protein 38 (563 aa).

A coiled-coil region spans residues 128 to 211 (TKKKTIKRFE…SIKSDIAKTE (84 aa)). The segment at 265 to 310 (DNSIDSDKMSVSEEWSSRRGSQGGRHGKHTLGQDSRKSSGFTRPES) is disordered. Positions 269 to 281 (DSDKMSVSEEWSS) are enriched in basic and acidic residues. Coiled-coil stretches lie at residues 361–415 (QDVD…RSRL) and 454–522 (NAVQ…AVAQ). Positions 543–563 (QELLLVSDTRSKSQDEEYFFS) are disordered.

As to quaternary structure, interacts with CCDC42, CFAP53, IFT88 and ODF2. Interacts with CCDC146. Interacts with TEKT3. Interacts with ubiquitinated histone H2A. In terms of tissue distribution, expressed exclusively in testis where it is detected mainly in spermatogonia and spermatocytes (at protein level).

The protein localises to the cytoplasm. Its subcellular location is the cytoskeleton. It is found in the microtubule organizing center. The protein resides in the centrosome. It localises to the perinuclear region. The protein localises to the cell projection. Its subcellular location is the cilium. It is found in the flagellum. Functionally, essential for male fertility. Required for sperm flagellum biogenesis. Also required for acrosome biogenesis. Required for the attachment of developing acrosomes to the nucleus during spermiogenesis and may be involved in the transport of fibrous sheath components. This is Coiled-coil domain-containing protein 38 (Ccdc38) from Mus musculus (Mouse).